The chain runs to 155 residues: Ribonuclease HI (155 aa).

In terms of domain architecture, RNase H type-1 spans 1–142 (MTKQVEIFTD…CDELARAAAE (142 aa)). 4 residues coordinate Mg(2+): Asp10, Glu48, Asp70, and Asp134.

It belongs to the RNase H family. As to quaternary structure, monomer. Mg(2+) is required as a cofactor.

The protein resides in the cytoplasm. The enzyme catalyses Endonucleolytic cleavage to 5'-phosphomonoester.. Endonuclease that specifically degrades the RNA of RNA-DNA hybrids. This chain is Ribonuclease HI, found in Vibrio vulnificus (strain CMCP6).